We begin with the raw amino-acid sequence, 71 residues long: Small ribosomal subunit protein eS17 (71 aa).

It belongs to the eukaryotic ribosomal protein eS17 family.

This Pyrobaculum islandicum (strain DSM 4184 / JCM 9189 / GEO3) protein is Small ribosomal subunit protein eS17.